Here is a 689-residue protein sequence, read N- to C-terminus: Protein asunder (689 aa).

Positions 521-550 (NGARLKLSKAKDQYRLLYRELEQLIQLNAT) form a coiled coil. Disordered stretches follow at residues 578-619 (GASL…SKRR) and 662-689 (PDFG…SVRS). A compositionally biased stretch (low complexity) spans 599–614 (SSGSASGSSNSNSLLK). The Nuclear localization signal (NLS) signature appears at 613–619 (LKASKRR).

It belongs to the Integrator subunit 13 family. As to quaternary structure, belongs to the multiprotein complex Integrator, at least composed of IntS1, IntS2, IntS3, IntS4, omd/IntS5, IntS6, defl/IntS7, IntS8, IntS9, IntS10, IntS11, IntS12, asun/IntS13, IntS14 and IntS15. The core complex associates with protein phosphatase 2A subunits mts/PP2A and Pp2A-29B, to form the Integrator-PP2A (INTAC) complex. Post-translationally, phosphorylated.

The protein resides in the nucleus. It is found in the cytoplasm. It localises to the perinuclear region. Component of the integrator complex, a multiprotein complex that terminates RNA polymerase II (Pol II) transcription in the promoter-proximal region of genes. The integrator complex provides a quality checkpoint during transcription elongation by driving premature transcription termination of transcripts that are unfavorably configured for transcriptional elongation: the complex terminates transcription by (1) catalyzing dephosphorylation of the C-terminal domain (CTD) of Pol II subunit Polr2A/Rbp1 and Spt5, and (2) degrading the exiting nascent RNA transcript via endonuclease activity. The integrator complex is also involved in the 3'-end processing of the U7 snRNA, and also the spliceosomal snRNAs U1, U2, U4 and U5. In Drosophila yakuba (Fruit fly), this protein is Protein asunder (asun).